The following is a 127-amino-acid chain: Large ribosomal subunit protein bL21 (127 aa).

This sequence belongs to the bacterial ribosomal protein bL21 family. As to quaternary structure, part of the 50S ribosomal subunit. Contacts protein L20.

Functionally, this protein binds to 23S rRNA in the presence of protein L20. The sequence is that of Large ribosomal subunit protein bL21 from Synechococcus elongatus (strain ATCC 33912 / PCC 7942 / FACHB-805) (Anacystis nidulans R2).